Here is a 432-residue protein sequence, read N- to C-terminus: 5-hydroxybenzimidazole synthase BzaA (432 aa).

Residues Met95, Tyr124, His163, 185–187 (SYG), and 226–229 (DGMR) contribute to the substrate site. Position 269 (His269) interacts with Zn(2+). A substrate-binding site is contributed by Phe292. His333 lines the Zn(2+) pocket. The [4Fe-4S] cluster site is built by Cys409, Cys412, and Cys416.

The protein belongs to the ThiC family. 5-hydroxybenzimidazole synthase subfamily. [4Fe-4S] cluster serves as cofactor.

It catalyses the reaction 5-amino-1-(5-phospho-beta-D-ribosyl)imidazole + AH2 + S-adenosyl-L-methionine = 5-hydroxybenzimidazole + 5'-deoxyadenosine + formate + L-methionine + A + NH4(+) + phosphate + 2 H(+). Its function is as follows. Together with BzaB, probably catalyzes the conversion of aminoimidazole ribotide (AIR) to 5-hydroxybenzimidazole (5-HBI) in a radical S-adenosyl-L-methionine (SAM)-dependent reaction. Is thus involved in the anaerobic biosynthesis of the benzimidazole lower axial ligand of the cobamide produced by M.thermoacetica. Requires BzaB for catalytic activity, as BzaA alone displays no activity. This Moorella thermoacetica (strain ATCC 39073 / JCM 9320) protein is 5-hydroxybenzimidazole synthase BzaA.